A 200-amino-acid chain; its full sequence is Holliday junction resolvase RecU (200 aa).

Residues 1–24 (MTIRYPNGKRYDQASQPHKTPIKK) are disordered. Mg(2+)-binding residues include Thr85, Asp87, Glu100, and Gln119.

It belongs to the RecU family. It depends on Mg(2+) as a cofactor.

It localises to the cytoplasm. It carries out the reaction Endonucleolytic cleavage at a junction such as a reciprocal single-stranded crossover between two homologous DNA duplexes (Holliday junction).. Endonuclease that resolves Holliday junction intermediates in genetic recombination. Cleaves mobile four-strand junctions by introducing symmetrical nicks in paired strands. Promotes annealing of linear ssDNA with homologous dsDNA. Required for DNA repair, homologous recombination and chromosome segregation. This chain is Holliday junction resolvase RecU, found in Bacillus mycoides (strain KBAB4) (Bacillus weihenstephanensis).